A 428-amino-acid polypeptide reads, in one-letter code: Histidinol dehydrogenase (428 aa).

3 residues coordinate NAD(+): Tyr-125, Gln-186, and Asn-209. Positions 232, 254, and 257 each coordinate substrate. Zn(2+) is bound by residues Gln-254 and His-257. Residues Glu-322 and His-323 each act as proton acceptor in the active site. The substrate site is built by His-323, Asp-356, Glu-410, and His-415. Asp-356 contacts Zn(2+). His-415 serves as a coordination point for Zn(2+).

Belongs to the histidinol dehydrogenase family. Requires Zn(2+) as cofactor.

The catalysed reaction is L-histidinol + 2 NAD(+) + H2O = L-histidine + 2 NADH + 3 H(+). Its pathway is amino-acid biosynthesis; L-histidine biosynthesis; L-histidine from 5-phospho-alpha-D-ribose 1-diphosphate: step 9/9. Functionally, catalyzes the sequential NAD-dependent oxidations of L-histidinol to L-histidinaldehyde and then to L-histidine. This is Histidinol dehydrogenase from Lactiplantibacillus plantarum (strain ATCC BAA-793 / NCIMB 8826 / WCFS1) (Lactobacillus plantarum).